The chain runs to 208 residues: CASP-like protein 1D1 (208 aa).

The interval 1-36 (MSSVDTEKPAPPPLETEAPPPPPPPPPPPPPPPPPP) is disordered. Topologically, residues 1–41 (MSSVDTEKPAPPPLETEAPPPPPPPPPPPPPPPPPPAGYSA) are cytoplasmic. Positions 9–36 (PAPPPLETEAPPPPPPPPPPPPPPPPPP) are enriched in pro residues. A helical transmembrane segment spans residues 42–62 (LDVVLRILLLGSAVASVVVMV). Topologically, residues 63-89 (TSVQTKLIAVAGVPVLVSNKAKFQNSP) are extracellular. A helical transmembrane segment spans residues 90-110 (AFIYFVAALSVVGLYSIITTL). Over 111-133 (ASFIFISKPSCSTKTILHLAIWD) the chain is Cytoplasmic. A helical membrane pass occupies residues 134–154 (VLMLGLAASATGTAGGVAYVG). Topologically, residues 155 to 180 (LKGNSHVGWNKVCNTYDKFCRHVGGS) are extracellular. Residues 181–201 (IAVALFASILLVLLVWLSLFT) traverse the membrane as a helical segment. Over 202-208 (LYSRIRK) the chain is Cytoplasmic.

Belongs to the Casparian strip membrane proteins (CASP) family. As to quaternary structure, homodimer and heterodimers.

The protein resides in the cell membrane. The polypeptide is CASP-like protein 1D1 (Vitis vinifera (Grape)).